We begin with the raw amino-acid sequence, 392 residues long: Formate-dependent phosphoribosylglycinamide formyltransferase (392 aa).

Residues 15-16 (EL) and E75 contribute to the N(1)-(5-phospho-beta-D-ribosyl)glycinamide site. ATP contacts are provided by residues R107, K148, 153–158 (SSGKGQ), 188–191 (EEFL), and E196. The 191-residue stretch at 112–302 (DLAAGELNLR…EFELHLRAVL (191 aa)) folds into the ATP-grasp domain. Mg(2+) contacts are provided by E261 and E273. Residues D280, K350, and 357–358 (RR) each bind N(1)-(5-phospho-beta-D-ribosyl)glycinamide.

It belongs to the PurK/PurT family. In terms of assembly, homodimer.

The enzyme catalyses N(1)-(5-phospho-beta-D-ribosyl)glycinamide + formate + ATP = N(2)-formyl-N(1)-(5-phospho-beta-D-ribosyl)glycinamide + ADP + phosphate + H(+). It participates in purine metabolism; IMP biosynthesis via de novo pathway; N(2)-formyl-N(1)-(5-phospho-D-ribosyl)glycinamide from N(1)-(5-phospho-D-ribosyl)glycinamide (formate route): step 1/1. Involved in the de novo purine biosynthesis. Catalyzes the transfer of formate to 5-phospho-ribosyl-glycinamide (GAR), producing 5-phospho-ribosyl-N-formylglycinamide (FGAR). Formate is provided by PurU via hydrolysis of 10-formyl-tetrahydrofolate. The polypeptide is Formate-dependent phosphoribosylglycinamide formyltransferase (Synechococcus sp. (strain CC9605)).